We begin with the raw amino-acid sequence, 324 residues long: MTGNAKLIDRVSAINWNRLQDEKDAEVWDRLTGNFWLPEKVPVSNDIPSWGTLTAGEKQLTMRVFTGLTMLDTIQGTVGAVSLIPDALTPHEEAVLTNIAFMESVHAKSYSQIFSTLCSTAEIDDAFRWSEENRNLQRKAEIVLQYYRGDEPLKRKVASTLLESFLFYSGFYLPMYWSSRAKLTNTADMIRLIIRDEAVHGYYIGYKFQRGLALVDDVTRAELKDYTYELLFELYDNEVEYTQDLYDEVGLTEDVKKFLRYNANKALMNLGYEALFPRDETDVNPAILSALSPNADENHDFFSGSGSSYVIGKAVVTEDDDWDF.

Positions 103 and 106 each coordinate Fe cation. Tyrosine 110 is a catalytic residue. Fe cation contacts are provided by glutamate 163, glutamate 197, and histidine 200.

This sequence belongs to the ribonucleoside diphosphate reductase small chain family. Tetramer of two alpha and two beta subunits. It depends on Fe cation as a cofactor.

It catalyses the reaction a 2'-deoxyribonucleoside 5'-diphosphate + [thioredoxin]-disulfide + H2O = a ribonucleoside 5'-diphosphate + [thioredoxin]-dithiol. Its function is as follows. Provides the precursors necessary for DNA synthesis. Catalyzes the biosynthesis of deoxyribonucleotides from the corresponding ribonucleotides. The polypeptide is Ribonucleoside-diphosphate reductase subunit beta nrdF2 (nrdF2) (Mycobacterium tuberculosis (strain CDC 1551 / Oshkosh)).